Consider the following 602-residue polypeptide: Protein SHORT-ROOT 1 (602 aa).

Positions 12-55 (AASEQQQQQQQSASYNSRSTTSSGSRSSSHQTNASYSYYHHSSN) are enriched in low complexity. Disordered regions lie at residues 12 to 69 (AASE…YYYG), 101 to 145 (DFSS…TAAG), and 165 to 185 (DFSS…AVGG). Gly residues predominate over residues 56-68 (SGGGGGGGGGYYY). Positions 122 to 145 (PPASSTPTGTAPTPPLSTSSTAAG) are enriched in low complexity. Residues 173–185 (SGGGTASSGAVGG) are compositionally biased toward gly residues. Positions 183–601 (VGGGGGGRWA…QPLVWASAWR (419 aa)) constitute a GRAS domain. Residues 190–253 (RWASQLLLEC…LTASGPRTLR (64 aa)) are leucine repeat I (LRI). The tract at residues 272–349 (ALRFQELSPW…PHLSITTVVS (78 aa)) is VHIID. A VHIID motif is present at residues 311–315 (FHILD). Residues 365–401 (EIGQRMEKFARLMGVPFRFRAVHHSGDLAELDLDALD) are leucine repeat II (LRII). The interval 411-517 (LAVNCVNSLR…ERGAGRAIVD (107 aa)) is PFYRE. An SAW region spans residues 520–601 (SCPASESMER…QPLVWASAWR (82 aa)).

It belongs to the GRAS family. As to quaternary structure, interacts with SCR1. Interacts with SMOS1. In terms of tissue distribution, expressed in leaves and roots. Detected in the stele, the endodermis and part of the cortex.

The protein localises to the nucleus. Functionally, transcription factor required for the asymmetric cell division involved in radial pattern formation in roots. Essential for both cell division and cell specification. This is Protein SHORT-ROOT 1 from Oryza sativa subsp. japonica (Rice).